The sequence spans 124 residues: uncharacterized protein (124 aa).

Positions 1–65 are disordered; sequence MAENSRYVRL…RPASSSNPDY (65 aa). Residues 37 to 47 are compositionally biased toward polar residues; the sequence is LNSNDAESQQV.

This is an uncharacterized protein from Microplitis demolitor (Parasitoid wasp).